Here is a 1265-residue protein sequence, read N- to C-terminus: DNA-directed RNA polymerase subunit beta'' (1265 aa).

The Zn(2+) site is built by cysteine 223, cysteine 297, cysteine 304, and cysteine 307.

It belongs to the RNA polymerase beta' chain family. RpoC2 subfamily. In terms of assembly, in plastids the minimal PEP RNA polymerase catalytic core is composed of four subunits: alpha, beta, beta', and beta''. When a (nuclear-encoded) sigma factor is associated with the core the holoenzyme is formed, which can initiate transcription. Zn(2+) serves as cofactor.

It localises to the plastid. Its subcellular location is the cyanelle. It catalyses the reaction RNA(n) + a ribonucleoside 5'-triphosphate = RNA(n+1) + diphosphate. Functionally, DNA-dependent RNA polymerase catalyzes the transcription of DNA into RNA using the four ribonucleoside triphosphates as substrates. The polypeptide is DNA-directed RNA polymerase subunit beta'' (Cyanophora paradoxa).